Reading from the N-terminus, the 276-residue chain is NADPH-dependent 7-cyano-7-deazaguanine reductase (276 aa).

A substrate-binding site is contributed by 80 to 82; it reads VES. Residue 82 to 83 coordinates NADPH; the sequence is SK. C183 functions as the Thioimide intermediate in the catalytic mechanism. D190 (proton donor) is an active-site residue. 222–223 serves as a coordination point for substrate; it reads HE. 251-252 provides a ligand contact to NADPH; that stretch reads RG.

This sequence belongs to the GTP cyclohydrolase I family. QueF type 2 subfamily. As to quaternary structure, homodimer.

It localises to the cytoplasm. It catalyses the reaction 7-aminomethyl-7-carbaguanine + 2 NADP(+) = 7-cyano-7-deazaguanine + 2 NADPH + 3 H(+). The protein operates within tRNA modification; tRNA-queuosine biosynthesis. Catalyzes the NADPH-dependent reduction of 7-cyano-7-deazaguanine (preQ0) to 7-aminomethyl-7-deazaguanine (preQ1). The chain is NADPH-dependent 7-cyano-7-deazaguanine reductase from Burkholderia cenocepacia (strain HI2424).